Consider the following 305-residue polypeptide: UDP-N-acetylenolpyruvoylglucosamine reductase (305 aa).

One can recognise an FAD-binding PCMH-type domain in the interval Val-35–His-214. Arg-179 is a catalytic residue. Catalysis depends on Ser-228, which acts as the Proton donor. The active site involves Glu-298.

Belongs to the MurB family. It depends on FAD as a cofactor.

It is found in the cytoplasm. The enzyme catalyses UDP-N-acetyl-alpha-D-muramate + NADP(+) = UDP-N-acetyl-3-O-(1-carboxyvinyl)-alpha-D-glucosamine + NADPH + H(+). Its pathway is cell wall biogenesis; peptidoglycan biosynthesis. Functionally, cell wall formation. The chain is UDP-N-acetylenolpyruvoylglucosamine reductase from Nitrobacter winogradskyi (strain ATCC 25391 / DSM 10237 / CIP 104748 / NCIMB 11846 / Nb-255).